Here is a 125-residue protein sequence, read N- to C-terminus: Histone H1-like protein Hc1 (125 aa).

Residues 98–125 (TKAKVKPTKKAAPKTKVKTAKKTRSTKK) form a disordered region. The span at 100-125 (AKVKPTKKAAPKTKVKTAKKTRSTKK) shows a compositional bias: basic residues.

It belongs to the histone H1/H5 family. HCT subfamily.

In terms of biological role, might have a role analogous to that of eukaryotic histone proteins. The chain is Histone H1-like protein Hc1 (hctA) from Chlamydia trachomatis serovar D (strain ATCC VR-885 / DSM 19411 / UW-3/Cx).